A 785-amino-acid chain; its full sequence is Probable splicing factor 3A subunit 1 (785 aa).

Met1 is subject to N-acetylmethionine. The tract at residues 1–42 (MFSSMQILPLEAPPTDGKLGPLPPSQLTDQEVEERELQAEQN) is disordered. The stretch at 71-113 (IVEKTAQFVSKNGLEFEKRIIVSNEKNAKFNFLKSSDPYHAFY) is one SURP motif 1 repeat. Positions 124 to 175 (NKDGAQGTDDSDGTTDPQLDTGAADESEAGDTQPDLQAQFRIPSKPLEAPEP) are disordered. The stretch at 193–235 (IIKLTAQFVARNGKSFLTGLSNRENNNPQFHFMKPTHSMFTFF) is one SURP motif 2 repeat. 2 disordered regions span residues 522-554 (NANG…GVPI) and 639-713 (RPYG…PNEN). 2 stretches are compositionally biased toward pro residues: residues 543–554 (AALPPPRPGVPI) and 653–674 (QPPP…PPLP). Basic and acidic residues predominate over residues 677–686 (PEAKRQKFDE). Residues 707–782 (VSKPNENDGQ…LTLSLRERGG (76 aa)) form the Ubiquitin-like domain.

In terms of assembly, component of splicing factor SF3A which is composed of three subunits.

The protein localises to the nucleus. The protein is Probable splicing factor 3A subunit 1 of Arabidopsis thaliana (Mouse-ear cress).